We begin with the raw amino-acid sequence, 412 residues long: MAKIQKIKGVADLFPEDSARYAFMEKTARDVFSSYGYGELRVPILEKTELFCRSIGEETDVVQKEMYTFPDRKGRSLTMRPEATAGIVRAYVENKIYQPGKVSKFFTFGPMFRYERPQAGRMRQFHQIDAEIFGAAEPQADAEVLLMLSSFLSNIGLEKLSFELNSLGCPECRPKYNQALKDFLASLDREQLCDDCQRRMDTNPLRVLDCKSKNCKALTENAPTLPDHLCGECREHFDTVIALIDEAGLQYTLNPRLVRGLDYYQRTAFEVTSGDIGAQTAVAGGGRYDGLVESLGGPKKVPAIGFACGMERLAMLLEGEFEPAADFYVALVDERAAKDSLIFGEKLRRSGLKGEVGFTAKSMKAQLRHANKINAQKCFIFGAEEFENGTVTIKDMAEGGEQETVSRDEYFK.

It belongs to the class-II aminoacyl-tRNA synthetase family. Homodimer.

Its subcellular location is the cytoplasm. It carries out the reaction tRNA(His) + L-histidine + ATP = L-histidyl-tRNA(His) + AMP + diphosphate + H(+). The protein is Histidine--tRNA ligase of Maridesulfovibrio salexigens (strain ATCC 14822 / DSM 2638 / NCIMB 8403 / VKM B-1763) (Desulfovibrio salexigens).